Here is a 239-residue protein sequence, read N- to C-terminus: Ribonuclease PH (239 aa).

Phosphate contacts are provided by residues arginine 86 and 124–126 (GTR).

This sequence belongs to the RNase PH family. In terms of assembly, homohexameric ring arranged as a trimer of dimers.

It catalyses the reaction tRNA(n+1) + phosphate = tRNA(n) + a ribonucleoside 5'-diphosphate. Its function is as follows. Phosphorolytic 3'-5' exoribonuclease that plays an important role in tRNA 3'-end maturation. Removes nucleotide residues following the 3'-CCA terminus of tRNAs; can also add nucleotides to the ends of RNA molecules by using nucleoside diphosphates as substrates, but this may not be physiologically important. Probably plays a role in initiation of 16S rRNA degradation (leading to ribosome degradation) during starvation. The sequence is that of Ribonuclease PH from Aromatoleum aromaticum (strain DSM 19018 / LMG 30748 / EbN1) (Azoarcus sp. (strain EbN1)).